Here is a 325-residue protein sequence, read N- to C-terminus: Natural cytotoxicity triggering receptor 1 (325 aa).

Residues 1-16 form the signal peptide; it reads MLPTLTALLCLGLCLS. At 17–258 the chain is on the extracellular side; it reads QRINTEKQTL…WDHTAQNLIR (242 aa). Ig-like domains follow at residues 42–100 and 137–192; these read GNSV…TCFY and GENV…RCFG. An intrachain disulfide couples C49 to C98. N-linked (GlcNAc...) asparagine glycosylation occurs at N139. C144 and C190 form a disulfide bridge. N-linked (GlcNAc...) asparagine glycosylation is present at N216. The helical transmembrane segment at 259 to 279 threads the bilayer; it reads IGLACIIVMALVWLLAEDWLS. The Cytoplasmic segment spans residues 280–325; the sequence is RRKDHEKLNRLTSWECRGRRRMHRYHEEEQRDAISMRELKATPGDM.

The protein belongs to the natural cytotoxicity receptor (NCR) family. As to quaternary structure, interacts with CD3Z and FCER1G. As to expression, weakly expressed in spleen, heart and lung.

It is found in the cell membrane. Cytotoxicity-activating receptor that may contribute to the increased efficiency of activated natural killer (NK) cells to mediate tumor cell lysis. The sequence is that of Natural cytotoxicity triggering receptor 1 (Ncr1) from Rattus norvegicus (Rat).